The following is a 479-amino-acid chain: uncharacterized protein (479 aa).

8 consecutive transmembrane segments (helical) span residues 25-45 (VVFV…LFFF), 63-83 (IAMI…LAGG), 110-130 (LFGP…TVIF), 133-153 (GVFN…AGIL), 175-195 (VLSI…VLGI), 229-249 (ILLY…IVWL), 287-307 (LILN…IAFI), and 328-348 (LFAP…LLLL).

The protein in the C-terminal section; belongs to the GatC family.

It is found in the cell membrane. This is an uncharacterized protein from Mycoplasma pneumoniae (strain ATCC 29342 / M129 / Subtype 1) (Mycoplasmoides pneumoniae).